The chain runs to 215 residues: uncharacterized protein (215 aa).

This is an uncharacterized protein from Escherichia coli (strain K12).